The primary structure comprises 131 residues: Small ribosomal subunit protein uS11 (131 aa).

It belongs to the universal ribosomal protein uS11 family. In terms of assembly, part of the 30S ribosomal subunit. Interacts with proteins S7 and S18. Binds to IF-3.

Functionally, located on the platform of the 30S subunit, it bridges several disparate RNA helices of the 16S rRNA. Forms part of the Shine-Dalgarno cleft in the 70S ribosome. The protein is Small ribosomal subunit protein uS11 of Syntrophotalea carbinolica (strain DSM 2380 / NBRC 103641 / GraBd1) (Pelobacter carbinolicus).